We begin with the raw amino-acid sequence, 422 residues long: MAAAAVVEFQRAQSLISTDRNASIDIFHSIVRRDVQEDDEEAVRVKEQSILELGSLLAKTGQAAELGGLLKFVRPFLISISKAKAARLVRSLLDLFLDMEAATGQEVELCLECIEWAKAEKRTFLRQALEARLISLYFDTKRYQEALQLESQLLQELKKMDDKALLVEVQLLESKTYHALSNLPKARAALTSARTTANAIYCPPKLQAALDMQSGIIHAAEEKDWKTAYSYFFEAFEGYDSIDSPRAVTALKYMLLCKIMLSLPEEVQALISGKLGLRYAGRQTDALKCIAQASKNRSLADFEKALTEYTKELRDDPIINTHLAKLYDNLLEQNLIRVIEPFSRVQITHIAGLIKLSKNDVERKLSQMILDKKFHGILDQGEDVLIIFEEPPVDKTYEAALETIQNMSKVVDSLYNKAKKLT.

The 165-residue stretch at 228–392 folds into the PCI domain; the sequence is AYSYFFEAFE…DVLIIFEEPP (165 aa).

Belongs to the proteasome subunit S9 family. Component of the lid subcomplex of the 19S proteasome regulatory particle complex (also named PA700 complex). The 26S proteasome consists of a 20S proteasome core and two 19S regulatory subunits.

Its subcellular location is the nucleus. It is found in the cytoplasm. It localises to the cytosol. Its function is as follows. Component of the lid subcomplex of the 26S proteasome, a multiprotein complex involved in the ATP-dependent degradation of ubiquitinated proteins. In the complex, psmd11b is required for proteasome assembly. The chain is 26S proteasome non-ATPase regulatory subunit 11B (psmd11b) from Danio rerio (Zebrafish).